The primary structure comprises 87 residues: UPF0367 protein P9303_26451 (87 aa).

This sequence belongs to the UPF0367 family.

The protein is UPF0367 protein P9303_26451 of Prochlorococcus marinus (strain MIT 9303).